We begin with the raw amino-acid sequence, 182 residues long: Large ribosomal subunit protein uL5c (182 aa).

Belongs to the universal ribosomal protein uL5 family. Part of the 50S ribosomal subunit; contacts the 5S rRNA.

It is found in the plastid. It localises to the chloroplast. Binds 5S rRNA, forms part of the central protuberance of the 50S subunit. This Cyanidium caldarium (Red alga) protein is Large ribosomal subunit protein uL5c (rpl5).